A 339-amino-acid chain; its full sequence is Ferredoxin--NADP reductase (339 aa).

FAD contacts are provided by aspartate 36, glutamine 44, tyrosine 49, valine 89, phenylalanine 123, aspartate 290, and threonine 331.

The protein belongs to the ferredoxin--NADP reductase type 2 family. In terms of assembly, homodimer. FAD serves as cofactor.

It catalyses the reaction 2 reduced [2Fe-2S]-[ferredoxin] + NADP(+) + H(+) = 2 oxidized [2Fe-2S]-[ferredoxin] + NADPH. This is Ferredoxin--NADP reductase from Acidiphilium cryptum (strain JF-5).